The following is a 420-amino-acid chain: ATP phosphoribosyltransferase regulatory subunit (420 aa).

The protein belongs to the class-II aminoacyl-tRNA synthetase family. HisZ subfamily. In terms of assembly, heteromultimer composed of HisG and HisZ subunits.

It localises to the cytoplasm. The protein operates within amino-acid biosynthesis; L-histidine biosynthesis; L-histidine from 5-phospho-alpha-D-ribose 1-diphosphate: step 1/9. Functionally, required for the first step of histidine biosynthesis. May allow the feedback regulation of ATP phosphoribosyltransferase activity by histidine. The polypeptide is ATP phosphoribosyltransferase regulatory subunit (Bacillus thuringiensis (strain Al Hakam)).